Reading from the N-terminus, the 159-residue chain is Large ribosomal subunit protein uL15 (159 aa).

Positions 1 to 18 are enriched in basic and acidic residues; that stretch reads MKLNEIRDNEGSSKDRIR. The tract at residues 1–37 is disordered; sequence MKLNEIRDNEGSSKDRIRVGRGIGSGKGKTGGRGVKG. The segment covering 21-35 has biased composition (gly residues); the sequence is RGIGSGKGKTGGRGV.

The protein belongs to the universal ribosomal protein uL15 family. As to quaternary structure, part of the 50S ribosomal subunit.

In terms of biological role, binds to the 23S rRNA. The polypeptide is Large ribosomal subunit protein uL15 (Agrobacterium fabrum (strain C58 / ATCC 33970) (Agrobacterium tumefaciens (strain C58))).